The chain runs to 312 residues: Malate dehydrogenase (312 aa).

NAD(+) contacts are provided by residues Gly-7–Gly-12 and Asp-32. Residues Arg-82 and Arg-88 each coordinate substrate. NAD(+)-binding positions include Asn-95 and Val-118–Asn-120. Substrate-binding residues include Asn-120 and Arg-151. His-175 functions as the Proton acceptor in the catalytic mechanism.

This sequence belongs to the LDH/MDH superfamily. MDH type 3 family.

The catalysed reaction is (S)-malate + NAD(+) = oxaloacetate + NADH + H(+). Functionally, catalyzes the reversible oxidation of malate to oxaloacetate. This chain is Malate dehydrogenase, found in Cytophaga hutchinsonii (strain ATCC 33406 / DSM 1761 / CIP 103989 / NBRC 15051 / NCIMB 9469 / D465).